We begin with the raw amino-acid sequence, 455 residues long: ATP-dependent protease ATPase subunit HslU (455 aa).

ATP contacts are provided by residues Ile-19, 61 to 66 (GVGKTE), Asp-268, Glu-333, and Arg-405.

The protein belongs to the ClpX chaperone family. HslU subfamily. In terms of assembly, a double ring-shaped homohexamer of HslV is capped on each side by a ring-shaped HslU homohexamer. The assembly of the HslU/HslV complex is dependent on binding of ATP.

The protein localises to the cytoplasm. Functionally, ATPase subunit of a proteasome-like degradation complex; this subunit has chaperone activity. The binding of ATP and its subsequent hydrolysis by HslU are essential for unfolding of protein substrates subsequently hydrolyzed by HslV. HslU recognizes the N-terminal part of its protein substrates and unfolds these before they are guided to HslV for hydrolysis. This is ATP-dependent protease ATPase subunit HslU from Francisella philomiragia subsp. philomiragia (strain ATCC 25017 / CCUG 19701 / FSC 153 / O#319-036).